Reading from the N-terminus, the 602-residue chain is tRNA uridine 5-carboxymethylaminomethyl modification enzyme MnmG (602 aa).

10 to 15 (GGGHAG) contributes to the FAD binding site. The interval 217–242 (DPQPRGFTGRPGPRAAESPTWQTHTT) is disordered. Residue 267-281 (GPRYCPSIEDKVVRF) coordinates NAD(+).

This sequence belongs to the MnmG family. As to quaternary structure, homodimer. Heterotetramer of two MnmE and two MnmG subunits. The cofactor is FAD.

It is found in the cytoplasm. In terms of biological role, NAD-binding protein involved in the addition of a carboxymethylaminomethyl (cmnm) group at the wobble position (U34) of certain tRNAs, forming tRNA-cmnm(5)s(2)U34. This chain is tRNA uridine 5-carboxymethylaminomethyl modification enzyme MnmG, found in Deinococcus geothermalis (strain DSM 11300 / CIP 105573 / AG-3a).